The chain runs to 838 residues: Envelope glycoprotein H (838 aa).

An N-terminal signal peptide occupies residues 1-18 (MGNGLWFVGVIILGVAWG). The Virion surface portion of the chain corresponds to 19–803 (QVHDWTEQTD…DTQPVAAIAP (785 aa)). N73 and N120 each carry an N-linked (GlcNAc...) asparagine; by host glycan. Residues 174-204 (FPRGDNVATASHPSGPRDTPPPRPPVGARRH) form a disordered region. N216 carries N-linked (GlcNAc...) asparagine; by host glycosylation. Positions 259-323 (DAALVRARYG…PGGPRYRVFV (65 aa)) are interaction with gL. 4 N-linked (GlcNAc...) asparagine; by host glycosylation sites follow: N332, N437, N670, and N784. The helical transmembrane segment at 804-824 (GFLAASALGVVMITAALAGIL) threads the bilayer. The Intravirion portion of the chain corresponds to 825–838 (KVLRTSVPFFWRRE).

It belongs to the herpesviridae glycoprotein H family. Interacts with glycoprotein L (gL); this interaction is necessary for the correct processing and cell surface expression of gH. The heterodimer gH/gL seems to interact with gB trimers during fusion. Associates with the gB-gH/gL-gD complex. Interacts with VP16. In terms of processing, N-glycosylated, O-glycosylated, and sialylated.

The protein resides in the virion membrane. It is found in the host cell membrane. Its subcellular location is the host endosome membrane. In terms of biological role, the heterodimer glycoprotein H-glycoprotein L is required for the fusion of viral and plasma membranes leading to virus entry into the host cell. Following initial binding to host receptor, membrane fusion is mediated by the fusion machinery composed of gB and the heterodimer gH/gL. May also be involved in the fusion between the virion envelope and the outer nuclear membrane during virion morphogenesis. The polypeptide is Envelope glycoprotein H (Human herpesvirus 1 (strain 17) (HHV-1)).